A 467-amino-acid chain; its full sequence is MKLPEALGSIHFVGIGGIGMSGIAEVLNNLGYTVQGSDVAENANVKRLRENGIAVTVGHKAENIDGAEVVVVSSAIKRDNPELLAARAKRLPVVRRAEMLAELMRLKSCVAIAGTHGKTTTTSLVATLLDKGGFDPTVINGGIINAYGTNARLGAGDWMVVEADESDGTFLKLPAEVAIITNIDPEHLDHFKTFDKVQEAFRTFVENVPFYGFAVMCIDHPVVQALVGRIEDRRIITYGENPQADVRLVDVDLRGGITRFGVVFRDRAGTAEHRIDGLKLPMPGKHNALNATAAIAVARELRVPDDRIIEAIGGFGGVKRRFTRTGEWKGATIFDDYGHHPVEISAVLRAARAATEGQVIAVVQPHRYTRLASLFDEFCTCFNDADHVIVAPVYAAGESPVPGADSEHLVQGLRARGHRSVTALKGPEELAGLVAGLAKPGDFVICLGAGTITQWAYALPGELEKLG.

Position 114 to 120 (114 to 120 (GTHGKTT)) interacts with ATP.

Belongs to the MurCDEF family.

It is found in the cytoplasm. It carries out the reaction UDP-N-acetyl-alpha-D-muramate + L-alanine + ATP = UDP-N-acetyl-alpha-D-muramoyl-L-alanine + ADP + phosphate + H(+). It participates in cell wall biogenesis; peptidoglycan biosynthesis. Its function is as follows. Cell wall formation. This Azorhizobium caulinodans (strain ATCC 43989 / DSM 5975 / JCM 20966 / LMG 6465 / NBRC 14845 / NCIMB 13405 / ORS 571) protein is UDP-N-acetylmuramate--L-alanine ligase.